The sequence spans 285 residues: Aldo-keto reductase (285 aa).

165 to 175 is a binding site for NADP(+); it reads APLAGGILTGK.

It belongs to the aldo/keto reductase family. Aldo/keto reductase 2 subfamily.

The sequence is that of Aldo-keto reductase from Babesia bovis.